We begin with the raw amino-acid sequence, 367 residues long: uncharacterized protein (367 aa).

The protein belongs to the mimivirus L17x/L18x family.

This is an uncharacterized protein from Acanthamoeba polyphaga (Amoeba).